Reading from the N-terminus, the 153-residue chain is Superoxide dismutase [Cu-Zn] (153 aa).

Residues H45, H47, and H62 each contribute to the Cu cation site. A disulfide bridge connects residues C56 and C145. Zn(2+) is bound by residues H62, H70, H79, and D82. H119 lines the Cu cation pocket.

Belongs to the Cu-Zn superoxide dismutase family. In terms of assembly, homodimer. It depends on Cu cation as a cofactor. Zn(2+) serves as cofactor.

It localises to the cytoplasm. The enzyme catalyses 2 superoxide + 2 H(+) = H2O2 + O2. In terms of biological role, destroys radicals which are normally produced within the cells and which are toxic to biological systems. This chain is Superoxide dismutase [Cu-Zn], found in Drosophila orena (Fruit fly).